The chain runs to 940 residues: UvrABC system protein A (940 aa).

Gly33 to Ser40 lines the ATP pocket. The segment at Cys252–Cys279 adopts a C4-type zinc-finger fold. 2 ABC transporter domains span residues Trp309–Leu586 and Ile606–Lys935. Residue Gly639–Ser646 participates in ATP binding. Residues Cys738 to Cys764 form a C4-type zinc finger.

It belongs to the ABC transporter superfamily. UvrA family. As to quaternary structure, forms a heterotetramer with UvrB during the search for lesions.

It is found in the cytoplasm. The UvrABC repair system catalyzes the recognition and processing of DNA lesions. UvrA is an ATPase and a DNA-binding protein. A damage recognition complex composed of 2 UvrA and 2 UvrB subunits scans DNA for abnormalities. When the presence of a lesion has been verified by UvrB, the UvrA molecules dissociate. The sequence is that of UvrABC system protein A from Lactococcus lactis subsp. lactis (strain IL1403) (Streptococcus lactis).